A 262-amino-acid polypeptide reads, in one-letter code: Thiazole synthase (262 aa).

The active-site Schiff-base intermediate with DXP is the K97. 1-deoxy-D-xylulose 5-phosphate-binding positions include G158, 185-186 (AG), and 207-208 (NT). A disordered region spans residues 243 to 262 (DKAQASTPTVGQPFWHSAEY).

Belongs to the ThiG family. In terms of assembly, homotetramer. Forms heterodimers with either ThiH or ThiS.

It localises to the cytoplasm. It catalyses the reaction [ThiS sulfur-carrier protein]-C-terminal-Gly-aminoethanethioate + 2-iminoacetate + 1-deoxy-D-xylulose 5-phosphate = [ThiS sulfur-carrier protein]-C-terminal Gly-Gly + 2-[(2R,5Z)-2-carboxy-4-methylthiazol-5(2H)-ylidene]ethyl phosphate + 2 H2O + H(+). The protein operates within cofactor biosynthesis; thiamine diphosphate biosynthesis. Functionally, catalyzes the rearrangement of 1-deoxy-D-xylulose 5-phosphate (DXP) to produce the thiazole phosphate moiety of thiamine. Sulfur is provided by the thiocarboxylate moiety of the carrier protein ThiS. In vitro, sulfur can be provided by H(2)S. The protein is Thiazole synthase of Neisseria meningitidis serogroup B (strain ATCC BAA-335 / MC58).